The primary structure comprises 425 residues: Pleckstrin homology domain-containing family A member 2 (425 aa).

The region spanning 7-113 is the PH 1 domain; it reads QNRICGFLDI…WVEALNQASK (107 aa). Lys141 participates in a covalent cross-link: Glycyl lysine isopeptide (Lys-Gly) (interchain with G-Cter in SUMO2). Ser184 bears the Phosphoserine mark. The PH 2 domain occupies 198 to 298; sequence PLIKSGYCVK…WIKEIGAAVQ (101 aa). Over residues 312 to 330 the composition is skewed to low complexity; that stretch reads SISLTRPGSSSLSSGPNSI. The disordered stretch occupies residues 312-332; the sequence is SISLTRPGSSSLSSGPNSILC. Phosphoserine is present on residues Ser314 and Ser349. The segment at 352–425 is disordered; the sequence is SSWQPWTPVP…DDENIRTSDV (74 aa). Residues 400–410 are compositionally biased toward basic and acidic residues; it reads RSEPQHPKEKP.

As to quaternary structure, binds MPDZ and PTPN13. Highly expressed in heart, kidney, spleen and peripheral blood leukocytes. Detected at lower levels in brain, skeletal muscle, colon, thymus, liver, small intestine, placenta and lung.

It localises to the cytoplasm. It is found in the cell membrane. The protein resides in the nucleus. Binds specifically to phosphatidylinositol 3,4-diphosphate (PtdIns3,4P2), but not to other phosphoinositides. May recruit other proteins to the plasma membrane. The polypeptide is Pleckstrin homology domain-containing family A member 2 (PLEKHA2) (Homo sapiens (Human)).